The primary structure comprises 502 residues: Probable cytosol aminopeptidase (502 aa).

Residues Lys269 and Asp274 each coordinate Mn(2+). Lys281 is a catalytic residue. Mn(2+)-binding residues include Asp292, Asp351, and Glu353. Arg355 is an active-site residue.

Belongs to the peptidase M17 family. Mn(2+) serves as cofactor.

It localises to the cytoplasm. The catalysed reaction is Release of an N-terminal amino acid, Xaa-|-Yaa-, in which Xaa is preferably Leu, but may be other amino acids including Pro although not Arg or Lys, and Yaa may be Pro. Amino acid amides and methyl esters are also readily hydrolyzed, but rates on arylamides are exceedingly low.. It carries out the reaction Release of an N-terminal amino acid, preferentially leucine, but not glutamic or aspartic acids.. Presumably involved in the processing and regular turnover of intracellular proteins. Catalyzes the removal of unsubstituted N-terminal amino acids from various peptides. This is Probable cytosol aminopeptidase from Shewanella piezotolerans (strain WP3 / JCM 13877).